Here is a 202-residue protein sequence, read N- to C-terminus: Neurensin-2 (202 aa).

2 helical membrane passes run 65 to 85 and 116 to 136; these read VAVA…GYAV and VVGA…LFLI. Residues 162-202 are disordered; the sequence is RDEPEKLSPAFHETSSQSPFLTPPSPFGQQSVQTSQPQRDL. The span at 188 to 202 shows a compositional bias: polar residues; sequence FGQQSVQTSQPQRDL.

This sequence belongs to the VMP family. Expressed specifically in brain where it is widely expressed, with highest levels of expression in thalamus and hypothalamus. In brain, found in neural cell bodies and detected in many regions of the limbic system, such as the septum nucleus, horizontal and vertical limbs of the diagonal band, hippocampus, amygdaloid nucleus, and habernula nucleus. Also localizes to small vesicles found in the perinuclear region of Neuro2a and PC12 cells.

It is found in the membrane. In terms of biological role, may play a role in maintenance and/or transport of vesicles. In Mus musculus (Mouse), this protein is Neurensin-2.